Here is a 701-residue protein sequence, read N- to C-terminus: Peptide transporter 3 (701 aa).

The next 9 helical transmembrane spans lie at 29–49 (FSFY…HEFS), 55–75 (FIYH…SIMA), 91–111 (IYVV…SYPI), 119–139 (GLFV…AFAA), 154–174 (FSFF…ITPI), 188–208 (FPLA…LFLM), 269–289 (GLLN…LFDQ), 318–338 (INPV…YPAL), and 351–371 (AVGG…QLKV). Residues Asn391 and Asn432 are each glycosylated (N-linked (GlcNAc...) asparagine). The next 3 helical transmembrane spans lie at 575–595 (ILWS…LSVT), 611–631 (VLTA…MMIS), and 641–661 (LEFF…ILLA).

Belongs to the major facilitator superfamily. Proton-dependent oligopeptide transporter (POT/PTR) (TC 2.A.17) family. In terms of tissue distribution, expressed in the AVA interneuron.

It localises to the membrane. Its function is as follows. Neuron-specific, H(+)-coupled oligopeptide transporter with broad specificity towards di- and tripeptides in a Na(+) and Cl(-)-independent manner. Shows H(+) channel activity in the absence of peptide substrates. This chain is Peptide transporter 3 (pept-3), found in Caenorhabditis elegans.